The following is a 104-amino-acid chain: Large ribosomal subunit protein uL24 (104 aa).

Belongs to the universal ribosomal protein uL24 family. Part of the 50S ribosomal subunit.

In terms of biological role, one of two assembly initiator proteins, it binds directly to the 5'-end of the 23S rRNA, where it nucleates assembly of the 50S subunit. Its function is as follows. One of the proteins that surrounds the polypeptide exit tunnel on the outside of the subunit. The chain is Large ribosomal subunit protein uL24 from Corynebacterium diphtheriae (strain ATCC 700971 / NCTC 13129 / Biotype gravis).